A 206-amino-acid chain; its full sequence is Emopamil-binding protein-like (206 aa).

Helical transmembrane passes span 10–30, 42–62, 101–121, and 165–185; these read EAGG…ALGL, GALI…GPFV, VEIL…YAIV, and CWLY…LLLW. Positions 39 to 184 constitute an EXPERA domain; sequence ADRGALIWLC…VWVLIPGLLL (146 aa).

Belongs to the EBP family. Homodimer. As to expression, widely expressed with highest levels in liver, lung and kidney.

It localises to the endoplasmic reticulum membrane. In terms of biological role, does not possess sterol isomerase activity and does not bind sigma ligands. This chain is Emopamil-binding protein-like (EBPL), found in Homo sapiens (Human).